The primary structure comprises 190 residues: Interferon alpha-7 (190 aa).

The signal sequence occupies residues 1 to 23 (MARLCAFLMVLAVMSYWPTCCLG). Disulfide bonds link cysteine 24/cysteine 122 and cysteine 52/cysteine 162. A glycan (N-linked (GlcNAc...) asparagine) is linked at asparagine 101.

It belongs to the alpha/beta interferon family.

The protein resides in the secreted. Functionally, produced by macrophages, IFN-alpha have antiviral activities. Interferon stimulates the production of two enzymes: a protein kinase and an oligoadenylate synthetase. This Mus musculus (Mouse) protein is Interferon alpha-7 (Ifna7).